Here is a 270-residue protein sequence, read N- to C-terminus: Fructose-2,6-bisphosphatase TIGAR (270 aa).

The active-site Tele-phosphohistidine intermediate is the H11. An N6-acetyllysine modification is found at K50. The Proton donor/acceptor role is filled by E89.

It belongs to the phosphoglycerate mutase family. In terms of assembly, interacts with HK2; the interaction increases hexokinase HK2 activity in a hypoxia- and HIF1A-dependent manner, resulting in the regulation of mitochondrial membrane potential, thus increasing NADPH production and decreasing intracellular ROS levels.

The protein localises to the cytoplasm. The protein resides in the nucleus. It is found in the mitochondrion. It carries out the reaction beta-D-fructose 2,6-bisphosphate + H2O = beta-D-fructose 6-phosphate + phosphate. Functionally, fructose-bisphosphatase hydrolyzing fructose-2,6-bisphosphate as well as fructose-1,6-bisphosphate. Acts as a negative regulator of glycolysis by lowering intracellular levels of fructose-2,6-bisphosphate in a p53/TP53-dependent manner, resulting in the pentose phosphate pathway (PPP) activation and NADPH production. Contributes to the generation of reduced glutathione to cause a decrease in intracellular reactive oxygen species (ROS) content, correlating with its ability to protect cells from oxidative or metabolic stress-induced cell death. Plays a role in promoting protection against cell death during hypoxia by decreasing mitochondria ROS levels in a HK2-dependent manner through a mechanism that is independent of its fructose-bisphosphatase activity. In response to cardiac damage stress, mediates p53-induced inhibition of myocyte mitophagy through ROS levels reduction and the subsequent inactivation of BNIP3. Reduced mitophagy results in an enhanced apoptotic myocyte cell death, and exacerbates cardiac damage. Plays a role in adult intestinal regeneration; contributes to the growth, proliferation and survival of intestinal crypts following tissue ablation. Plays a neuroprotective role against ischemic brain damage by enhancing PPP flux and preserving mitochondria functions. Protects glioma cells from hypoxia- and ROS-induced cell death by inhibiting glycolysis and activating mitochondrial energy metabolism and oxygen consumption in a TKTL1-dependent and p53/TP53-independent manner. Plays a role in cancer cell survival by promoting DNA repair through activating PPP flux in a CDK5-ATM-dependent signaling pathway during hypoxia and/or genome stress-induced DNA damage responses. Involved in intestinal tumor progression. In Bos taurus (Bovine), this protein is Fructose-2,6-bisphosphatase TIGAR.